Reading from the N-terminus, the 501-residue chain is Zinc finger and SCAN domain-containing protein 12 (501 aa).

Residues Lys20 and Lys26 each participate in a glycyl lysine isopeptide (Lys-Gly) (interchain with G-Cter in SUMO2) cross-link. The region spanning 51 to 132 is the SCAN box domain; sequence QFCYQETSGP…DLERELDELG (82 aa). Residues 175 to 194 form a disordered region; the sequence is REAQEEQVSGVETGNEPRNV. Polar residues predominate over residues 180-194; that stretch reads EQVSGVETGNEPRNV. A Glycyl lysine isopeptide (Lys-Gly) (interchain with G-Cter in SUMO2) cross-link involves residue Lys197. The tract at residues 223 to 255 is disordered; it reads EAHNPGEESSGISHEDSQPLRNENGVNSPANSE. A compositionally biased stretch (polar residues) spans 241–253; it reads PLRNENGVNSPAN. 6 consecutive C2H2-type zinc fingers follow at residues 269–291, 297–319, 325–347, 353–375, 381–403, and 409–431; these read HGCDECGKSFTQHSRLIEHKRVH, YKCEVCGKTFRWRTVLIRHKVVH, YKCNECGRAFGQWSALNQHQRLH, YHCNECGKAFCQKAGLFHHLKSH, YQCLQCNKSFNRRSTLSQHQGVH, and YECNDCGKAFVYNSSLATHQETH. A disordered region spans residues 429–450; sequence ETHHKEKPFTQSGPIQQQRNHT. Positions 437–447 are enriched in polar residues; it reads FTQSGPIQQQR. The C2H2-type 7 zinc finger occupies 455-477; sequence YKCSVCGKAFIQKISLIEHEQIH. The C2H2-type 8; degenerate zinc-finger motif lies at 483-501; sequence YKCAEGGKAFIQMSELTEH.

It belongs to the krueppel C2H2-type zinc-finger protein family. In terms of tissue distribution, testis specific.

The protein resides in the nucleus. May be involved in transcriptional regulation. In Mus musculus (Mouse), this protein is Zinc finger and SCAN domain-containing protein 12 (Zscan12).